The chain runs to 43 residues: uncharacterized protein (43 aa).

A helical membrane pass occupies residues 21–41 (SSFALIVVLFILLIIVGAAIF).

The protein belongs to the SscA family.

It localises to the membrane. This is an uncharacterized protein from Bacillus subtilis (strain 168).